The sequence spans 249 residues: MINILVSNDDGVRAPGIIALTHALSEFAQVLTVAPDRNCSGASNSLTLTNPLRINNLENGYISVNGTPTDCVHLAIRQLCQTEPDIVVSGINAGANMGDDTLYSGTVAAAMEGRFLGLPAIAVSLVGKSLIHYDTAAIFAAKIVKGLLEHPISRDQILNVNVPDLPLAQIKGIKVTRLGARHKAEGMIKTQDPAGKDIYWLGPVGSEQDAGEGTDFGAVAAGYVSITPLTVDLTAYNQLDGLADWIIKI.

Positions 9, 10, 40, and 92 each coordinate a divalent metal cation.

Belongs to the SurE nucleotidase family. A divalent metal cation serves as cofactor.

It is found in the cytoplasm. It catalyses the reaction a ribonucleoside 5'-phosphate + H2O = a ribonucleoside + phosphate. In terms of biological role, nucleotidase that shows phosphatase activity on nucleoside 5'-monophosphates. This is 5'-nucleotidase SurE from Shewanella frigidimarina (strain NCIMB 400).